A 75-amino-acid polypeptide reads, in one-letter code: UPF0512 protein D (75 aa).

A disordered region spans residues 1–20 (MAIFKSISSISNSTGSMGSS).

Belongs to the UPF0512 family.

This is UPF0512 protein D from Dictyostelium discoideum (Social amoeba).